The sequence spans 309 residues: Probable manganese-dependent inorganic pyrophosphatase (309 aa).

The Mn(2+) site is built by histidine 9, aspartate 13, aspartate 15, aspartate 75, histidine 97, and aspartate 149.

This sequence belongs to the PPase class C family. Requires Mn(2+) as cofactor.

It localises to the cytoplasm. The catalysed reaction is diphosphate + H2O = 2 phosphate + H(+). This chain is Probable manganese-dependent inorganic pyrophosphatase, found in Bacillus anthracis (strain CDC 684 / NRRL 3495).